The following is a 122-amino-acid chain: NLMQFELLIMKVAGRSGIVWYSDYGCFCGKGGHGRPQDATDRCCFVHDCCYGKVTECDPKMDFYRYSSNNGDIVCEANNPCTKEICECDKAAAICFRDNKDTYDNKYWNIPMEGCQEESEPC.

Disulfide bonds link Cys-26-Cys-115, Cys-28-Cys-44, Cys-43-Cys-95, Cys-49-Cys-122, Cys-50-Cys-88, Cys-57-Cys-81, and Cys-75-Cys-86. Ca(2+)-binding residues include Phe-27, Gly-29, and Gly-31. The active site involves His-47. Asp-48 is a Ca(2+) binding site. The active site involves Asp-89.

The protein belongs to the phospholipase A2 family. Group II subfamily. D49 sub-subfamily. As to quaternary structure, monomer (predominant). Non-covalently linked homodimers are also observed. Ca(2+) serves as cofactor. Expressed by the venom gland.

It localises to the secreted. The enzyme catalyses a 1,2-diacyl-sn-glycero-3-phosphocholine + H2O = a 1-acyl-sn-glycero-3-phosphocholine + a fatty acid + H(+). With respect to regulation, preincubation with heparin slightly increase the enzymatic activity. Functionally, snake venom phospholipase A2 (PLA2) that inhibits platelet aggregation induced by ADP, arachidonic acid and PAF. Acts in a enzymatic independent manner on a proteinase-activated receptor (PAR1, F2R) to evoke calcium release through the inositol 1,4,5-trisphosphate receptor (ITPR1, IP3R) and induces mouse aorta contraction. PAR1, phospholipase C and IP3R inhibitors suppress PA2-induced aorta contraction. PLA2 catalyzes the calcium-dependent hydrolysis of the 2-acyl groups in 3-sn-phosphoglycerides. This Trimeresurus stejnegeri (Chinese green tree viper) protein is Acidic phospholipase A2 5.